A 702-amino-acid chain; its full sequence is Putative methyltransferase NSUN7 (702 aa).

Catalysis depends on Cys424, which acts as the Nucleophile. Disordered stretches follow at residues 522–541 (KSSKREKKKKKSKTSLTKAA), 567–593 (ETVTKPSLPQKNTAQVGASSQTRKHKL), and 675–702 (PTPSLSRKGEKPKDDTRSSLLRPPRRWL). The segment covering 523–534 (SSKREKKKKKSK) has biased composition (basic residues). The segment covering 567 to 587 (ETVTKPSLPQKNTAQVGASSQ) has biased composition (polar residues). Residues 681–691 (RKGEKPKDDTR) are compositionally biased toward basic and acidic residues.

The protein belongs to the class I-like SAM-binding methyltransferase superfamily. RsmB/NOP family.

Its function is as follows. May have S-adenosyl-L-methionine-dependent methyl-transferase activity. The sequence is that of Putative methyltransferase NSUN7 (NSUN7) from Macaca fascicularis (Crab-eating macaque).